A 947-amino-acid chain; its full sequence is Bromodomain testis-specific protein (947 aa).

Residues 27-133 (RLTNQLQYLQ…KLFMQKLSQM (107 aa)) form the Bromo 1 domain. Asn-109 is a JQ1 binding site. Ser-187 carries the post-translational modification Phosphoserine. Residues 202–228 (QTAAQVTKGVKRKADTTTPATSAVKAS) form a disordered region. Residues 209–220 (KGVKRKADTTTP) carry the Nuclear localization signal motif. Polar residues predominate over residues 217-228 (TTTPATSAVKAS). The region spanning 267 to 376 (VKVTEQLRHC…DVFETHFSKI (110 aa)) is the Bromo 2 domain. Disordered regions lie at residues 395–420 (ETTG…DERV), 444–511 (PFRK…KPMN), 610–698 (NNQL…IPPE), and 882–924 (NKCS…RRRE). The stretch at 417–470 (DERVKRLAKLQEQLKAVHQQLQVLSQVPFRKLNKKKEKSKKEKKKEKVNNSNEN) forms a coiled coil. The segment covering 447-462 (KLNKKKEKSKKEKKKE) has biased composition (basic residues). A compositionally biased stretch (basic and acidic residues) spans 470 to 481 (NPRKMCEQMRLK). Over residues 482–494 (EKSKRNQPKKRKQ) the composition is skewed to basic residues. Residues 500–582 (KSEDEDNAKP…ACLRKRPLKP (83 aa)) form the NET domain. Residues 591–621 (KEELHSQKKQELEKRLLDVNNQLNSRKRQTK) adopt a coiled-coil conformation. The span at 637 to 662 (LSESSSSSSSSSESESSSSDLSSSDS) shows a compositional bias: low complexity. Basic and acidic residues-rich tracts occupy residues 674–692 (TEVK…KMKN) and 885–924 (SGEE…RRRE).

This sequence belongs to the BET family. Interacts with mRNA splicing machinery proteins SRSF2, DDX5, HNRNPK and TARDBP. Interacts with the acetylated N-terminus of histone H1, H2, H3 and H4. Interacts with P-TEFb components CDK9 and CCNT1/cyclin-T1. Interacts with SMARCE1. Interacts with the acetylated N-terminus of histone H1.4, H2A, H2B, H3 and H4. In terms of processing, ubiquitinated in a SPOP-dependent manner, leading to proteasomal degradation. In terms of tissue distribution, testis-specific. A 3-fold higher expression is seen in adult testis than in embryo testis. Expression seems to be correlated with histone H4 hyperacetylation during the haploid phase of spermatogenesis (spermiogenesis). No expression, or very low expression is seen in patients' testes with abnormal spermatogenesis. Expressed in cancers such as non-small cell lung cancer and squamous cell carcinomas of the head and neck as well as of esophagus, but not in melanoma or in cancers of the colon, breast, kidney and bladder.

Its subcellular location is the nucleus. Testis-specific chromatin protein that specifically binds histone H4 acetylated at 'Lys-5' and 'Lys-8' (H4K5ac and H4K8ac, respectively) and plays a key role in spermatogenesis. Required in late pachytene spermatocytes: plays a role in meiotic and post-meiotic cells by binding to acetylated histones at the promoter of specific meiotic and post-meiotic genes, facilitating their activation at the appropriate time. In the post-meiotic phase of spermatogenesis, binds to hyperacetylated histones and participates in their general removal from DNA. Also recognizes and binds a subset of butyrylated histones: able to bind histone H4 butyrylated at 'Lys-8' (H4K8ac), while it is not able to bind H4 butyrylated at 'Lys-5' (H4K5ac). Also acts as a component of the splicing machinery in pachytene spermatocytes and round spermatids and participates in 3'-UTR truncation of specific mRNAs in post-meiotic spermatids. Required for chromocenter organization, a structure comprised of peri-centromeric heterochromatin. The chain is Bromodomain testis-specific protein (BRDT) from Homo sapiens (Human).